A 281-amino-acid chain; its full sequence is Phosphatidylglycerol--prolipoprotein diacylglyceryl transferase (281 aa).

4 helical membrane-spanning segments follow: residues 23 to 43 (IGPL…LFAW), 71 to 91 (FVIW…VLFY), 107 to 127 (WDGG…MILF), and 133 to 153 (ILVW…LGVV). Position 154 (Arg-154) interacts with a 1,2-diacyl-sn-glycero-3-phospho-(1'-sn-glycerol). A run of 3 helical transmembrane segments spans residues 189–209 (LYEA…LVWG), 217–237 (GFVA…VEFF), and 247–267 (LFGG…LLGL).

Belongs to the Lgt family.

Its subcellular location is the cell inner membrane. The catalysed reaction is L-cysteinyl-[prolipoprotein] + a 1,2-diacyl-sn-glycero-3-phospho-(1'-sn-glycerol) = an S-1,2-diacyl-sn-glyceryl-L-cysteinyl-[prolipoprotein] + sn-glycerol 1-phosphate + H(+). The protein operates within protein modification; lipoprotein biosynthesis (diacylglyceryl transfer). Functionally, catalyzes the transfer of the diacylglyceryl group from phosphatidylglycerol to the sulfhydryl group of the N-terminal cysteine of a prolipoprotein, the first step in the formation of mature lipoproteins. The chain is Phosphatidylglycerol--prolipoprotein diacylglyceryl transferase from Brucella canis (strain ATCC 23365 / NCTC 10854 / RM-666).